The primary structure comprises 500 residues: L-arabinose isomerase (500 aa).

Mn(2+) is bound by residues Glu-306, Glu-333, His-350, and His-450.

Belongs to the arabinose isomerase family. Homohexamer. The cofactor is Mn(2+).

It carries out the reaction beta-L-arabinopyranose = L-ribulose. It functions in the pathway carbohydrate degradation; L-arabinose degradation via L-ribulose; D-xylulose 5-phosphate from L-arabinose (bacterial route): step 1/3. In terms of biological role, catalyzes the conversion of L-arabinose to L-ribulose. The chain is L-arabinose isomerase from Escherichia coli O139:H28 (strain E24377A / ETEC).